Consider the following 318-residue polypeptide: Thymidylate synthase (318 aa).

Residues Arg25 and 180 to 181 (RR) contribute to the dUMP site. Cys200 (nucleophile) is an active-site residue. DUMP contacts are provided by residues 220 to 223 (RSGD), Asn231, and 261 to 263 (HIY). Asp223 contributes to the (6R)-5,10-methylene-5,6,7,8-tetrahydrofolate binding site. A (6R)-5,10-methylene-5,6,7,8-tetrahydrofolate-binding site is contributed by Ala317.

The protein belongs to the thymidylate synthase family. Bacterial-type ThyA subfamily. Homodimer.

It is found in the cytoplasm. The catalysed reaction is dUMP + (6R)-5,10-methylene-5,6,7,8-tetrahydrofolate = 7,8-dihydrofolate + dTMP. It functions in the pathway pyrimidine metabolism; dTTP biosynthesis. Its function is as follows. Catalyzes the reductive methylation of 2'-deoxyuridine-5'-monophosphate (dUMP) to 2'-deoxythymidine-5'-monophosphate (dTMP) while utilizing 5,10-methylenetetrahydrofolate (mTHF) as the methyl donor and reductant in the reaction, yielding dihydrofolate (DHF) as a by-product. This enzymatic reaction provides an intracellular de novo source of dTMP, an essential precursor for DNA biosynthesis. The sequence is that of Thymidylate synthase from Bacillus cereus (strain ATCC 10987 / NRS 248).